The primary structure comprises 785 residues: Protein translocase subunit SecA 3 (785 aa).

ATP-binding positions include Gln98, 116–120 (GEGKT), and Asp505.

It belongs to the SecA family. In terms of assembly, monomer and homodimer. Part of the essential Sec protein translocation apparatus which comprises SecA, SecYEG and auxiliary proteins SecDF. Other proteins may also be involved.

It is found in the cell membrane. Its subcellular location is the cytoplasm. It carries out the reaction ATP + H2O + cellular proteinSide 1 = ADP + phosphate + cellular proteinSide 2.. In terms of biological role, part of the Sec protein translocase complex. Interacts with the SecYEG preprotein conducting channel. Has a central role in coupling the hydrolysis of ATP to the transfer of proteins into and across the cell membrane, serving as an ATP-driven molecular motor driving the stepwise translocation of polypeptide chains across the membrane. The protein is Protein translocase subunit SecA 3 of Mycolicibacterium vanbaalenii (strain DSM 7251 / JCM 13017 / BCRC 16820 / KCTC 9966 / NRRL B-24157 / PYR-1) (Mycobacterium vanbaalenii).